We begin with the raw amino-acid sequence, 796 residues long: Protein translocase subunit SecA 2 (796 aa).

Residues Gln84, 102 to 106 (GEGKT), and Asp496 each bind ATP.

It belongs to the SecA family. As to quaternary structure, monomer and homodimer. Part of the essential Sec protein translocation apparatus which comprises SecA, SecYEG and auxiliary proteins SecDF. Other proteins may also be involved.

The protein resides in the cell membrane. The protein localises to the cytoplasm. It catalyses the reaction ATP + H2O + cellular proteinSide 1 = ADP + phosphate + cellular proteinSide 2.. Part of the Sec protein translocase complex. Interacts with the SecYEG preprotein conducting channel. Has a central role in coupling the hydrolysis of ATP to the transfer of proteins into and across the cell membrane, serving as an ATP-driven molecular motor driving the stepwise translocation of polypeptide chains across the membrane. This chain is Protein translocase subunit SecA 2, found in Staphylococcus aureus (strain MRSA252).